A 98-amino-acid polypeptide reads, in one-letter code: NADH-ubiquinone oxidoreductase chain 4L (98 aa).

The next 3 membrane-spanning stretches (helical) occupy residues 1 to 21 (MEQI…GVLT), 28 to 48 (STLL…VLLI), and 61 to 81 (LILL…LVTI).

This sequence belongs to the complex I subunit 4L family. As to quaternary structure, core subunit of respiratory chain NADH dehydrogenase (Complex I) which is composed of 45 different subunits.

Its subcellular location is the mitochondrion inner membrane. The enzyme catalyses a ubiquinone + NADH + 5 H(+)(in) = a ubiquinol + NAD(+) + 4 H(+)(out). In terms of biological role, core subunit of the mitochondrial membrane respiratory chain NADH dehydrogenase (Complex I) which catalyzes electron transfer from NADH through the respiratory chain, using ubiquinone as an electron acceptor. Part of the enzyme membrane arm which is embedded in the lipid bilayer and involved in proton translocation. The protein is NADH-ubiquinone oxidoreductase chain 4L (MT-ND4L) of Monodelphis domestica (Gray short-tailed opossum).